Consider the following 446-residue polypeptide: D-inositol 3-phosphate glycosyltransferase (446 aa).

Residue H19 coordinates 1D-myo-inositol 3-phosphate. UDP-N-acetyl-alpha-D-glucosamine contacts are provided by residues 25 to 26 and G33; that span reads QP. 1D-myo-inositol 3-phosphate contacts are provided by residues 30 to 35, K88, Y121, T145, and R165; that span reads DAGGMN. The UDP-N-acetyl-alpha-D-glucosamine site is built by R239, K244, and Q303. Residues Y312, R313, and S315 each coordinate Mg(2+). UDP-N-acetyl-alpha-D-glucosamine-binding residues include E325 and E333. Mg(2+) is bound at residue T339.

The protein belongs to the glycosyltransferase group 1 family. MshA subfamily. Homodimer.

The catalysed reaction is 1D-myo-inositol 3-phosphate + UDP-N-acetyl-alpha-D-glucosamine = 1D-myo-inositol 2-acetamido-2-deoxy-alpha-D-glucopyranoside 3-phosphate + UDP + H(+). Catalyzes the transfer of a N-acetyl-glucosamine moiety to 1D-myo-inositol 3-phosphate to produce 1D-myo-inositol 2-acetamido-2-deoxy-glucopyranoside 3-phosphate in the mycothiol biosynthesis pathway. The chain is D-inositol 3-phosphate glycosyltransferase from Rhodococcus opacus (strain B4).